Consider the following 154-residue polypeptide: SsrA-binding protein (154 aa).

It belongs to the SmpB family.

It localises to the cytoplasm. Required for rescue of stalled ribosomes mediated by trans-translation. Binds to transfer-messenger RNA (tmRNA), required for stable association of tmRNA with ribosomes. tmRNA and SmpB together mimic tRNA shape, replacing the anticodon stem-loop with SmpB. tmRNA is encoded by the ssrA gene; the 2 termini fold to resemble tRNA(Ala) and it encodes a 'tag peptide', a short internal open reading frame. During trans-translation Ala-aminoacylated tmRNA acts like a tRNA, entering the A-site of stalled ribosomes, displacing the stalled mRNA. The ribosome then switches to translate the ORF on the tmRNA; the nascent peptide is terminated with the 'tag peptide' encoded by the tmRNA and targeted for degradation. The ribosome is freed to recommence translation, which seems to be the essential function of trans-translation. This is SsrA-binding protein from Enterococcus faecalis (strain ATCC 700802 / V583).